We begin with the raw amino-acid sequence, 119 residues long: Large ribosomal subunit protein uL24 (119 aa).

Belongs to the universal ribosomal protein uL24 family. In terms of assembly, part of the 50S ribosomal subunit.

In terms of biological role, one of two assembly initiator proteins, it binds directly to the 5'-end of the 23S rRNA, where it nucleates assembly of the 50S subunit. Its function is as follows. Located at the polypeptide exit tunnel on the outside of the subunit. This chain is Large ribosomal subunit protein uL24, found in Methanococcus maripaludis (strain DSM 14266 / JCM 13030 / NBRC 101832 / S2 / LL).